The following is a 633-amino-acid chain: Chaperone protein HtpG (633 aa).

The a; substrate-binding stretch occupies residues 1–341; that stretch reads MTAPHETMSF…SADLPLNVSR (341 aa). The b stretch occupies residues 342–562; it reads ELLQESRDVK…EGDMSGYLQR (221 aa). The c stretch occupies residues 563–633; sequence LLKQAGQKAP…YVQRVNKLLA (71 aa).

Belongs to the heat shock protein 90 family. As to quaternary structure, homodimer.

Its subcellular location is the cytoplasm. Its function is as follows. Molecular chaperone. Has ATPase activity. The chain is Chaperone protein HtpG from Cupriavidus taiwanensis (strain DSM 17343 / BCRC 17206 / CCUG 44338 / CIP 107171 / LMG 19424 / R1) (Ralstonia taiwanensis (strain LMG 19424)).